The sequence spans 487 residues: Transmembrane protein 161B (487 aa).

The N-linked (GlcNAc...) asparagine glycan is linked to asparagine 34. A helical membrane pass occupies residues leucine 107–phenylalanine 127. N-linked (GlcNAc...) asparagine glycosylation is present at asparagine 135. A run of 2 helical transmembrane segments spans residues isoleucine 136 to threonine 156 and serine 169 to threonine 189. Asparagine 203 carries N-linked (GlcNAc...) asparagine glycosylation. 5 helical membrane-spanning segments follow: residues phenylalanine 228–leucine 248, isoleucine 265–valine 285, leucine 305–leucine 325, valine 367–histidine 387, and leucine 459–phenylalanine 479.

This sequence belongs to the TMEM161 family.

It localises to the cell membrane. Functionally, essential for maintaining normal cardiac rhythm in the developing heart and for neonatal survival. Inhibits potassium and calcium currents in the cardiomyocytes, this assists in timely action potential repolarization and thereby maintains normal cardiac rhythm. The protein is Transmembrane protein 161B (Tmem161b) of Mus musculus (Mouse).